A 1103-amino-acid polypeptide reads, in one-letter code: Isoleucine--tRNA ligase (1103 aa).

The disordered stretch occupies residues 1-25; sequence MSENVYPKANEGGETAHVAPNPSFP. Residues 65 to 75 carry the 'HIGH' region motif; the sequence is PFANGLPHYGH. The short motif at 649–653 is the 'KMSKS' region element; that stretch reads KMSKH. Residue K652 participates in ATP binding.

This sequence belongs to the class-I aminoacyl-tRNA synthetase family. IleS type 2 subfamily. As to quaternary structure, monomer. It depends on Zn(2+) as a cofactor.

It localises to the cytoplasm. The enzyme catalyses tRNA(Ile) + L-isoleucine + ATP = L-isoleucyl-tRNA(Ile) + AMP + diphosphate. Functionally, catalyzes the attachment of isoleucine to tRNA(Ile). As IleRS can inadvertently accommodate and process structurally similar amino acids such as valine, to avoid such errors it has two additional distinct tRNA(Ile)-dependent editing activities. One activity is designated as 'pretransfer' editing and involves the hydrolysis of activated Val-AMP. The other activity is designated 'posttransfer' editing and involves deacylation of mischarged Val-tRNA(Ile). The protein is Isoleucine--tRNA ligase of Bifidobacterium longum (strain NCC 2705).